A 217-amino-acid polypeptide reads, in one-letter code: Methylthioribulose-1-phosphate dehydratase (217 aa).

His-106 and His-108 together coordinate Zn(2+).

This sequence belongs to the aldolase class II family. MtnB subfamily. The cofactor is Zn(2+).

The catalysed reaction is 5-(methylsulfanyl)-D-ribulose 1-phosphate = 5-methylsulfanyl-2,3-dioxopentyl phosphate + H2O. It functions in the pathway amino-acid biosynthesis; L-methionine biosynthesis via salvage pathway; L-methionine from S-methyl-5-thio-alpha-D-ribose 1-phosphate: step 2/6. Its function is as follows. Catalyzes the dehydration of methylthioribulose-1-phosphate (MTRu-1-P) into 2,3-diketo-5-methylthiopentyl-1-phosphate (DK-MTP-1-P). The protein is Methylthioribulose-1-phosphate dehydratase of Xanthomonas euvesicatoria pv. vesicatoria (strain 85-10) (Xanthomonas campestris pv. vesicatoria).